A 93-amino-acid chain; its full sequence is Acylphosphatase (93 aa).

Residues 6–93 (RAHVFISGRV…GEERGFSIIW (88 aa)) form the Acylphosphatase-like domain. Residues Arg21 and Asn39 contribute to the active site.

The protein belongs to the acylphosphatase family.

The enzyme catalyses an acyl phosphate + H2O = a carboxylate + phosphate + H(+). This chain is Acylphosphatase (acyP), found in Roseiflexus sp. (strain RS-1).